Reading from the N-terminus, the 384-residue chain is Probable endopolygalacturonase C (384 aa).

Positions 1–19 (MVRQLALACGLLAAVAVQA) are cleaved as a signal peptide. Residues 20–40 (APAEPAHPMVTEAPDASLLHK) constitute a propeptide that is removed on maturation. An intrachain disulfide couples Cys-45 to Cys-63. PbH1 repeat units lie at residues 176-207 (ATDLTLTDITIDNTDGDTDDLAANTDGFDIGE) and 208-229 (STDITITGAKVYNQDDCVAINS). Catalysis depends on Asp-222, which acts as the Proton donor. Cys-224 and Cys-240 are joined by a disulfide. Residue His-244 is part of the active site. PbH1 repeat units lie at residues 254 to 280 (RDDNTVKNVTFYDVNVLKSQQAIRIKA) and 288 to 310 (ISDITYHEIAFSDATDYGIVIEQ). Asn-261 carries an N-linked (GlcNAc...) asparagine glycan. 2 disulfide bridges follow: Cys-349–Cys-354 and Cys-373–Cys-382.

It belongs to the glycosyl hydrolase 28 family.

The protein resides in the secreted. The enzyme catalyses (1,4-alpha-D-galacturonosyl)n+m + H2O = (1,4-alpha-D-galacturonosyl)n + (1,4-alpha-D-galacturonosyl)m.. Functionally, involved in maceration and soft-rotting of plant tissue. Hydrolyzes the 1,4-alpha glycosidic bonds of de-esterified pectate in the smooth region of the plant cell wall. This Aspergillus aculeatus protein is Probable endopolygalacturonase C (pgaC).